A 122-amino-acid chain; its full sequence is Large ribosomal subunit protein uL14c (122 aa).

Belongs to the universal ribosomal protein uL14 family. In terms of assembly, part of the 50S ribosomal subunit.

The protein localises to the plastid. The protein resides in the chloroplast. In terms of biological role, binds to 23S rRNA. This Welwitschia mirabilis (Tree tumbo) protein is Large ribosomal subunit protein uL14c.